The primary structure comprises 311 residues: Aspartate carbamoyltransferase catalytic subunit (311 aa).

Residues R59 and T60 each contribute to the carbamoyl phosphate site. K87 contributes to the L-aspartate binding site. Carbamoyl phosphate contacts are provided by R109, H139, and Q142. Positions 172 and 224 each coordinate L-aspartate. Positions 265 and 266 each coordinate carbamoyl phosphate.

Belongs to the aspartate/ornithine carbamoyltransferase superfamily. ATCase family. Heterododecamer (2C3:3R2) of six catalytic PyrB chains organized as two trimers (C3), and six regulatory PyrI chains organized as three dimers (R2).

The enzyme catalyses carbamoyl phosphate + L-aspartate = N-carbamoyl-L-aspartate + phosphate + H(+). It participates in pyrimidine metabolism; UMP biosynthesis via de novo pathway; (S)-dihydroorotate from bicarbonate: step 2/3. Its function is as follows. Catalyzes the condensation of carbamoyl phosphate and aspartate to form carbamoyl aspartate and inorganic phosphate, the committed step in the de novo pyrimidine nucleotide biosynthesis pathway. The chain is Aspartate carbamoyltransferase catalytic subunit from Streptococcus equi subsp. zooepidemicus (strain MGCS10565).